The chain runs to 214 residues: Leucyl/phenylalanyl-tRNA--protein transferase (214 aa).

Belongs to the L/F-transferase family.

It is found in the cytoplasm. The catalysed reaction is N-terminal L-lysyl-[protein] + L-leucyl-tRNA(Leu) = N-terminal L-leucyl-L-lysyl-[protein] + tRNA(Leu) + H(+). It catalyses the reaction N-terminal L-arginyl-[protein] + L-leucyl-tRNA(Leu) = N-terminal L-leucyl-L-arginyl-[protein] + tRNA(Leu) + H(+). It carries out the reaction L-phenylalanyl-tRNA(Phe) + an N-terminal L-alpha-aminoacyl-[protein] = an N-terminal L-phenylalanyl-L-alpha-aminoacyl-[protein] + tRNA(Phe). Functions in the N-end rule pathway of protein degradation where it conjugates Leu, Phe and, less efficiently, Met from aminoacyl-tRNAs to the N-termini of proteins containing an N-terminal arginine or lysine. In Cereibacter sphaeroides (strain ATCC 17029 / ATH 2.4.9) (Rhodobacter sphaeroides), this protein is Leucyl/phenylalanyl-tRNA--protein transferase.